A 234-amino-acid chain; its full sequence is uncharacterized protein (234 aa).

4 consecutive transmembrane segments (helical) span residues 22–42 (TFLNTLIYCILLVIYEYIPLI), 59–79 (INWALSFGILPCAFAIFAYLI), 154–174 (FWIFFEFSIIALISFLIIFFC), and 186–206 (LLSLFFFVILSFSVSGIIFAL).

Its subcellular location is the cell membrane. This is an uncharacterized protein from Escherichia coli (strain K12).